Here is a 460-residue protein sequence, read N- to C-terminus: Chromosomal replication initiator protein DnaA (460 aa).

A domain I, interacts with DnaA modulators region spans residues 1-84; sequence MAVSLWQQCI…RFDIGSRPSA (84 aa). Positions 84 to 123 are domain II; the sequence is AKKPEPAPVAAVRVPSPQTKASVGTAFNTTEPVANTNHRS. The domain III, AAA+ region stretch occupies residues 124–340; that stretch reads NINPTYQFDN…GALNRVIANA (217 aa). Positions 168, 170, 171, and 172 each coordinate ATP. The domain IV, binds dsDNA stretch occupies residues 341–460; the sequence is NFTGRPITID…YANLIRTLSS (120 aa).

Belongs to the DnaA family. As to quaternary structure, oligomerizes as a right-handed, spiral filament on DNA at oriC.

The protein resides in the cytoplasm. In terms of biological role, plays an essential role in the initiation and regulation of chromosomal replication. ATP-DnaA binds to the origin of replication (oriC) to initiate formation of the DNA replication initiation complex once per cell cycle. Binds the DnaA box (a 9 base pair repeat at the origin) and separates the double-stranded (ds)DNA. Forms a right-handed helical filament on oriC DNA; dsDNA binds to the exterior of the filament while single-stranded (ss)DNA is stabiized in the filament's interior. The ATP-DnaA-oriC complex binds and stabilizes one strand of the AT-rich DNA unwinding element (DUE), permitting loading of DNA polymerase. After initiation quickly degrades to an ADP-DnaA complex that is not apt for DNA replication. Binds acidic phospholipids. This chain is Chromosomal replication initiator protein DnaA, found in Shewanella oneidensis (strain ATCC 700550 / JCM 31522 / CIP 106686 / LMG 19005 / NCIMB 14063 / MR-1).